Reading from the N-terminus, the 45-residue chain is Metallothionein-like protein 1A (45 aa).

The protein belongs to the metallothionein superfamily. Type 15 family. As to expression, expressed in phloem and mesophyll cells of leaves, vascular tissues of cotyledons, sepals and petals. Expressed in anthers. Expressed in root endodermis and at lower levels in cortex of mature region of roots.

In terms of biological role, metallothioneins have a high content of cysteine residues that bind various heavy metals. Functions as a metal chelator of copper (Cu) and zinc (Zn). Plays a role in Cu homeostasis in the roots under elevated Cu concentration. Functions cooperatively with the phytochelatin synthase PCS1 to protect plants from Cu and cadmium (Cd) toxicity. Plays a role in Cu homeostasis, specifically in the remobilization of Cu from senescing leaves. The mobilization of Cu from internal sources is important for seed development. Confers tolerance to Cd and plays a role in Cd and Zn homeostasis. In Arabidopsis thaliana (Mouse-ear cress), this protein is Metallothionein-like protein 1A (MT1A).